A 431-amino-acid chain; its full sequence is Signal recognition particle 54 kDa protein (431 aa).

GTP contacts are provided by residues Gly-105–Thr-112, Asp-185–Arg-189, and Thr-243–Asp-246.

The protein belongs to the GTP-binding SRP family. SRP54 subfamily. Part of the signal recognition particle protein translocation system, which is composed of SRP and FtsY. Archaeal SRP consists of a 7S RNA molecule of 300 nucleotides and two protein subunits: SRP54 and SRP19.

Its subcellular location is the cytoplasm. The catalysed reaction is GTP + H2O = GDP + phosphate + H(+). Functionally, involved in targeting and insertion of nascent membrane proteins into the cytoplasmic membrane. Binds to the hydrophobic signal sequence of the ribosome-nascent chain (RNC) as it emerges from the ribosomes. The SRP-RNC complex is then targeted to the cytoplasmic membrane where it interacts with the SRP receptor FtsY. This is Signal recognition particle 54 kDa protein from Pyrobaculum calidifontis (strain DSM 21063 / JCM 11548 / VA1).